The sequence spans 277 residues: Type IV methyl-directed restriction enzyme EcoKMcrA (277 aa).

The 51-residue stretch at 207-257 (CENCGKNAPFYLNDGNPYLEVHHVIPLSSGGADTTDNCVALCPNCHRELHY) folds into the HNH domain.

Restriction of 5-methyl and 5-hydroxymethylcytosines at the specific DNA sequence 5'-C(me)CGG-3'. The protein is Type IV methyl-directed restriction enzyme EcoKMcrA of Escherichia coli (strain K12).